The primary structure comprises 407 residues: MKYDNLLDRFIKYVKVNTRSDPDSETTPSTESQEAFALTILKPEMEAIGLQDVHYNPVNGYLIGTLPANNPTLTRKIGFIAHMDTADFNAENVNPQIIDNYQGGDITLGSSNYKLDPKAFPNLNNYIGQTLITTDGTTLLGADDKSGIAEIMTAIEFLTSQPQIEHCDIKVAFGPDEEIGVGADKFEVADFEVDFAYTMDGGPLGELQYETFSAAALEVTFLGRNVHPGTAKDQMINALELAIDFHEKLPAKERPEYTDGYQGFYHLTGLTGTVEEARASYIIRDFEEASFEARKVKVENIAQSMNAHLGTKRVLVELNDQYYNMKKVIEKDMTAIELAKEVMEELAIKPVIEPIRGGTDGSKISFMGIPTPNIFAGGENMHGRFEFVSLQTMERAIDVIIGLVCKA.

Histidine 82 is a Zn(2+) binding site. Aspartate 84 is a catalytic residue. Residue aspartate 143 participates in Zn(2+) binding. Residue glutamate 177 is the Proton acceptor of the active site. The Zn(2+) site is built by glutamate 178, aspartate 200, and histidine 382.

This sequence belongs to the peptidase M20B family. Requires Zn(2+) as cofactor.

It is found in the cytoplasm. It catalyses the reaction Release of the N-terminal residue from a tripeptide.. In terms of biological role, cleaves the N-terminal amino acid of tripeptides. The chain is Peptidase T from Streptococcus pyogenes serotype M3 (strain ATCC BAA-595 / MGAS315).